Consider the following 604-residue polypeptide: Sulfite reductase [NADPH] flavoprotein alpha-component (604 aa).

A Flavodoxin-like domain is found at 68 to 206 (LSIIFASQTG…PAAEWRKQAL (139 aa)). Residues 74–79 (SQTGNA), 121–124 (STNG), and 157–166 (LGDSSYEFFC) each bind FMN. Residues 239–453 (QNPYTATLLT…VEHNNNFKLP (215 aa)) enclose the FAD-binding FR-type domain. Residues threonine 327, glycine 361, 391 to 394 (RLYS), 409 to 411 (TVG), tyrosine 415, and 424 to 427 (GGAS) contribute to the FAD site. NADP(+) contacts are provided by residues 524–525 (SR), 530–534 (KVYVQ), and aspartate 566. FAD is bound at residue tyrosine 604.

Belongs to the NADPH-dependent sulphite reductase flavoprotein subunit CysJ family. It in the N-terminal section; belongs to the flavodoxin family. The protein in the C-terminal section; belongs to the flavoprotein pyridine nucleotide cytochrome reductase family. As to quaternary structure, alpha(8)-beta(8). The alpha component is a flavoprotein, the beta component is a hemoprotein. It depends on FAD as a cofactor. Requires FMN as cofactor.

The enzyme catalyses hydrogen sulfide + 3 NADP(+) + 3 H2O = sulfite + 3 NADPH + 4 H(+). Its pathway is sulfur metabolism; hydrogen sulfide biosynthesis; hydrogen sulfide from sulfite (NADPH route): step 1/1. In terms of biological role, component of the sulfite reductase complex that catalyzes the 6-electron reduction of sulfite to sulfide. This is one of several activities required for the biosynthesis of L-cysteine from sulfate. The flavoprotein component catalyzes the electron flow from NADPH -&gt; FAD -&gt; FMN to the hemoprotein component. The chain is Sulfite reductase [NADPH] flavoprotein alpha-component from Aliivibrio fischeri (strain ATCC 700601 / ES114) (Vibrio fischeri).